A 224-amino-acid chain; its full sequence is Orotate phosphoribosyltransferase (224 aa).

Residues Lys-26, Tyr-73–Lys-74, Arg-100, Lys-101, Lys-104, His-106, and Glu-127–Ser-135 contribute to the 5-phospho-alpha-D-ribose 1-diphosphate site. 2 residues coordinate orotate: Thr-131 and Arg-160.

Belongs to the purine/pyrimidine phosphoribosyltransferase family. PyrE subfamily. Homodimer. The cofactor is Mg(2+).

It catalyses the reaction orotidine 5'-phosphate + diphosphate = orotate + 5-phospho-alpha-D-ribose 1-diphosphate. Its pathway is pyrimidine metabolism; UMP biosynthesis via de novo pathway; UMP from orotate: step 1/2. Functionally, catalyzes the transfer of a ribosyl phosphate group from 5-phosphoribose 1-diphosphate to orotate, leading to the formation of orotidine monophosphate (OMP). In Clostridium beijerinckii (strain ATCC 51743 / NCIMB 8052) (Clostridium acetobutylicum), this protein is Orotate phosphoribosyltransferase.